Here is a 372-residue protein sequence, read N- to C-terminus: MKYDLIIIGSGSVGAAAGYYATRAGLKVLMTDAHMPPHQQGSHHGDTRLIRHAYGEGEKYVPLMLRAQTLWDELSTHNEEPIFVRSGVVNLGPADSAFLANVARSAQQWQLNVERLDATALMTRWPEIRVPDNYIGLFEADSGFLRSELAITTWLRLAREAGCAQLFNSQVSHIHHDDNGVTIETSEGSYHASKALISAGTWVKALVPELPVQPVRKVFAWFKADGRYSTKNRFPAFTGEMPNGDQYYGFPAENDELKIGKHNGGQLIQAPEERKPFAAVASDGAEAFPFLRNVLPGIGGCLHGAACTYDNSPDENFIIDTLPGHENTLVITGLSGHGFKFAPVLGEIAADFALGKTSSFDLTPFRLSRFSQ.

Residue 4–34 (DLIIIGSGSVGAAAGYYATRAGLKVLMTDAH) coordinates FAD. Residue Cys307 is modified to S-8alpha-FAD cysteine.

It belongs to the MSOX/MTOX family. MTOX subfamily. As to quaternary structure, monomer. FAD is required as a cofactor.

It catalyses the reaction N(alpha)-methyl-L-tryptophan + O2 + H2O = L-tryptophan + formaldehyde + H2O2. Its function is as follows. Catalyzes the oxidative demethylation of N-methyl-L-tryptophan. The chain is N-methyl-L-tryptophan oxidase from Salmonella dublin (strain CT_02021853).